Consider the following 1146-residue polypeptide: MDECLPNSCLLGVHLVISTHSGPQIVYHYPPSNTAFLTNNPTKHQHLYGNHANLNKNTSTNKEEKLFNSGSTKTASQIALNESAKSYNTAITPSMTNTNTNNVTLPPTRSHANTVGSQSSIPAATNGVGYRKTDIEDTSRTFQYQETESETSSSGLSDSELSTDYLDISSDSFSISSSLSSSSLSSSPSSSSSSSPPQDGLSRTNSSFQSTDSMSPTSPQMIMENDSISVAESYLDSGTNNKSRAASKRSQNFFHKLSTKKSTDSKTHSPVRKLKSKPSQSTKKGNKLLKNTSNETDGNAFTGSCSISSKKSLSSTGEHNQELRNSSLNDTPGQSPHHYHHRYHHYHKNAATSQRNSHTQYDVEEEDMEVSAMLQDGKISMNEIFFEEENFQDINKILEFDNDFVAEFCSPEREMCNTRFEFTVDNFCFLGLPIHVDSQGRWRKSKHKNKTRSKRSSSTTTNISRKKSIASKISSLSENTLKKVNSGEADTVYDSNIGHEASTDTPNLRINTDVSGNEFEREKEDLGKNMNMFHVCFVMNPHLIEYNKRIDDMYQFVVTRLSLLLRYVQSKTSYISSECHIILKEKERVLKHSKTYQSIRGAGNKGKYLYQRILAKSSLARALTECVDKIQRNEIACLEINDDKVISLQIPIQNEFEKMPNFKLQPVLRGSYLTSILNMKFLEKSSLRIESQNRQNDQAQFSDTNNNIYRFGNNINSTGHCGAANVDDGDDNESNYYCDDNDDLLNYALLLLDEPNNIISSLETFSYQDDIGTIILKHLVRNIQPNIPLRSYRYLITDLLDNPSSLDDLTTETNSLESSILRSCALHLMYWRHARIVIPLSSKYTYIVSPLAPIQGYTIDDYKSTSQNDGNVKKMDDRENNKSGSDRVPLIYQNSMLFRSKFPSLPSLPIFLSLLSTDKPQAYSNIIPSREHKPVYLNALAWLIQYGYVTQLLTFINIRVDKHIKMAVDEDLEKEGFRKTNTARRPSMDYKKTDKKLDDEDGQSRDANASEACSGKNEGMQSNDNNKDVDEKDNENDSRVDDRDDNEIAIADEEEILHFEYDDPEMQHDYTIILEPERATAIEKRWLYRCIYGQPSDIQILFNKLLKYFNGKVPMELVIIKEEISRHDLKKLLNALDKYLIEIHHW.

An N-terminal signal peptide occupies residues 1–25 (MDECLPNSCLLGVHLVISTHSGPQI). S76 carries the post-translational modification Phosphoserine. Disordered stretches follow at residues 90–159 (AITP…LSDS), 177–221 (SSLS…SPQM), 237–340 (SGTN…HHYH), and 440–466 (GRWR…ISRK). Residues 105–123 (LPPTRSHANTVGSQSSIPA) show a composition bias toward polar residues. Composition is skewed to low complexity over residues 150 to 159 (ETSSSGLSDS) and 177 to 196 (SSLS…SSSP). Composition is skewed to polar residues over residues 201-221 (LSRT…SPQM), 237-253 (SGTN…SQNF), and 277-303 (KPSQ…AFTG). Low complexity predominate over residues 304–315 (SCSISSKKSLSS). Residues 323–334 (LRNSSLNDTPGQ) are compositionally biased toward polar residues. Positions 441 to 455 (RWRKSKHKNKTRSKR) are enriched in basic residues. Residues S486 and S987 each carry the phosphoserine modification. Residues 979 to 1047 (KTNTARRPSM…SRVDDRDDNE (69 aa)) form a disordered region. 2 stretches are compositionally biased toward basic and acidic residues: residues 986-1004 (PSMD…DGQS) and 1025-1042 (NNKD…RVDD).

It belongs to the NPR3 family. In terms of assembly, component of the SEA complex composed of at least IML1/SEA1, RTC1/SEA2, MTC5/SEA3, NPR2, NPR3, SEA4, SEC13 and SEH1. Forms a heterodimer with NPR2.

The protein localises to the vacuole membrane. Its function is as follows. Component of the SEA complex which coats the vacuolar membrane and is involved in intracellular trafficking, autophagy, response to nitrogen starvation, and amino acid biogenesis. Mediates inactivation of the TORC1 complex in response to amino acid starvation. Required for meiotic nuclear division. This is Nitrogen permease regulator 3 (NPR3) from Saccharomyces cerevisiae (strain ATCC 204508 / S288c) (Baker's yeast).